Reading from the N-terminus, the 302-residue chain is Sulfate adenylyltransferase subunit 2 (302 aa).

This sequence belongs to the PAPS reductase family. CysD subfamily. In terms of assembly, heterodimer composed of CysD, the smaller subunit, and CysN.

The catalysed reaction is sulfate + ATP + H(+) = adenosine 5'-phosphosulfate + diphosphate. It functions in the pathway sulfur metabolism; hydrogen sulfide biosynthesis; sulfite from sulfate: step 1/3. Functionally, with CysN forms the ATP sulfurylase (ATPS) that catalyzes the adenylation of sulfate producing adenosine 5'-phosphosulfate (APS) and diphosphate, the first enzymatic step in sulfur assimilation pathway. APS synthesis involves the formation of a high-energy phosphoric-sulfuric acid anhydride bond driven by GTP hydrolysis by CysN coupled to ATP hydrolysis by CysD. The sequence is that of Sulfate adenylyltransferase subunit 2 from Proteus mirabilis (strain HI4320).